The primary structure comprises 183 residues: Maltose O-acetyltransferase (183 aa).

Asn-83 lines the acetyl-CoA pocket. The Proton donor/acceptor role is filled by His-113. Residues Gly-140, Ser-158, 163–164, Arg-178, and Lys-181 contribute to the acetyl-CoA site; that span reads TK.

This sequence belongs to the transferase hexapeptide repeat family. Homodimer.

It carries out the reaction D-maltose + acetyl-CoA = 1-O-acetylmaltose + CoA. Its function is as follows. Catalyzes the CoA-dependent transfer of an acetyl group to maltose and other sugars. Acetylates glucose exclusively at the C6 position and maltose at the C6 position of the non-reducing end glucosyl moiety. Is able to acetylate maltooligosaccharides. The protein is Maltose O-acetyltransferase (maa) of Escherichia coli (strain K12).